Here is a 126-residue protein sequence, read N- to C-terminus: Large ribosomal subunit protein bL19 (126 aa).

It belongs to the bacterial ribosomal protein bL19 family.

Its function is as follows. This protein is located at the 30S-50S ribosomal subunit interface and may play a role in the structure and function of the aminoacyl-tRNA binding site. In Thiobacillus denitrificans (strain ATCC 25259 / T1), this protein is Large ribosomal subunit protein bL19.